Here is a 376-residue protein sequence, read N- to C-terminus: Putative peptide import ATP-binding protein BMEII0205 (376 aa).

The tract at residues 1–25 (MPLRPALHLRTGKLRQTPTHNEPDG) is disordered. The 251-residue stretch at 64–314 (VRTDDLVRDF…PLHPYSRALL (251 aa)) folds into the ABC transporter domain. An ATP-binding site is contributed by 106-113 (GESGSGKS).

Belongs to the ABC transporter superfamily. The complex is composed of two ATP-binding proteins (BMEII0205 and BMEII0206), two transmembrane proteins (BMEII0207/BMEII0208 and BMEII0209) and a solute-binding protein (BMEII0210).

The protein resides in the cell inner membrane. Probably part of an ABC transporter complex that could be involved in peptide import. Probably responsible for energy coupling to the transport system. This Brucella melitensis biotype 1 (strain ATCC 23456 / CCUG 17765 / NCTC 10094 / 16M) protein is Putative peptide import ATP-binding protein BMEII0205.